The primary structure comprises 258 residues: Type III pantothenate kinase (258 aa).

6–13 (DVGNTNTV) is an ATP binding site. Substrate is bound by residues Y100 and 107 to 110 (GADR). D109 functions as the Proton acceptor in the catalytic mechanism. K(+) is bound at residue D129. Residue T132 coordinates ATP. Residue T184 participates in substrate binding.

The protein belongs to the type III pantothenate kinase family. In terms of assembly, homodimer. Requires NH4(+) as cofactor. The cofactor is K(+).

It localises to the cytoplasm. The enzyme catalyses (R)-pantothenate + ATP = (R)-4'-phosphopantothenate + ADP + H(+). It functions in the pathway cofactor biosynthesis; coenzyme A biosynthesis; CoA from (R)-pantothenate: step 1/5. Catalyzes the phosphorylation of pantothenate (Pan), the first step in CoA biosynthesis. The chain is Type III pantothenate kinase from Bacillus velezensis (strain DSM 23117 / BGSC 10A6 / LMG 26770 / FZB42) (Bacillus amyloliquefaciens subsp. plantarum).